Here is a 107-residue protein sequence, read N- to C-terminus: Large ribosomal subunit protein bL21 (107 aa).

It belongs to the bacterial ribosomal protein bL21 family. As to quaternary structure, part of the 50S ribosomal subunit. Contacts protein L20.

In terms of biological role, this protein binds to 23S rRNA in the presence of protein L20. The sequence is that of Large ribosomal subunit protein bL21 from Chlamydia muridarum (strain MoPn / Nigg).